The following is a 1424-amino-acid chain: Serine/threonine-protein kinase LMTK3 (1424 aa).

The first 20 residues, 1–20 (MPAPGALILLAAVSASGCLA), serve as a signal peptide directing secretion. Residues 40 to 60 (AVVLISCSGLLAFIFLLLTCL) form a helical membrane-spanning segment. The interval 74–95 (NPEGEDCSGEYTPPAEETSSSQ) is disordered. Residues 133–411 (LSYLQEIGSG…SDLQLQLTYL (279 aa)) form the Protein kinase domain. Residues 139–147 (IGSGWFGKV) and lysine 164 contribute to the ATP site. Serine 232 is modified (phosphoserine). Aspartate 266 serves as the catalytic Proton acceptor. 2 disordered regions span residues 413–465 (SERP…PDDV) and 486–516 (RGAG…PFYE). The segment covering 418-439 (RPPPPPPPPRDGPFPWPWPPSH) has biased composition (pro residues). Arginine 490 is modified (omega-N-methylarginine). The span at 496–507 (PWQPASAPPAPH) shows a compositional bias: pro residues. A phosphoserine mark is found at serine 531 and serine 535. Disordered regions lie at residues 544 to 666 (EHGS…PLPC), 680 to 964 (LERG…MSPE), 976 to 1024 (MSPK…APET), 1041 to 1313 (GLEM…RKRK), and 1325 to 1424 (LFDQ…PVEN). Polar residues predominate over residues 571-584 (QTPSEVPQLVSETW). Residues 638–647 (AEEEEEESSP) show a composition bias toward acidic residues. Positions 700–713 (PPEDDSSLRAERGS) are enriched in basic and acidic residues. Residues 744-758 (RGPPPAPPPPPPPPR) show a composition bias toward pro residues. The segment covering 759 to 791 (ASAEPAASPDPPSALASPGSGLSSPGPKPGDSG) has biased composition (low complexity). Residues 818–841 (PRAPPEPPDPGAPRPPPDPGPLPL) are compositionally biased toward pro residues. Residues 935-954 (DMKEKVAENGLESPEKEERA) show a composition bias toward basic and acidic residues. Serine 947, serine 962, and serine 977 each carry phosphoserine. A compositionally biased stretch (basic and acidic residues) spans 994–1004 (RNTERPPEIGP). Positions 1084–1094 (GSGGRALGGVG) are enriched in gly residues. A compositionally biased stretch (low complexity) spans 1095–1105 (TAPAGGPASAV). Positions 1167-1177 (DPLKPERKGPE) are enriched in basic and acidic residues. The span at 1200-1213 (SRLSLALPPLTLTP) shows a compositional bias: low complexity. Positions 1231–1241 (AAGGEAGGAGA) are enriched in gly residues. A compositionally biased stretch (acidic residues) spans 1245-1261 (AEEDGEDEDEDEEDEEA). Residues 1262-1272 (AGSRDPGRTRE) are compositionally biased toward basic and acidic residues. Residues 1329–1339 (ETPTNELSVQG) show a composition bias toward polar residues. Positions 1348 to 1360 (STPPAPPTPPHPT) are enriched in pro residues.

This sequence belongs to the protein kinase superfamily. Tyr protein kinase family. Interacts with ESR1. Interacts with AP-2 complex subunit alpha. The cofactor is Mg(2+). Post-translationally, autophosphorylated. In terms of tissue distribution, expressed in brain. Predominantly expressed in cerebral cortex, thalamus, the cerebellum and hippocampal formation (at protein level).

The protein resides in the membrane. It localises to the cell projection. It is found in the axon. Its subcellular location is the dendrite. The protein localises to the golgi apparatus membrane. The enzyme catalyses L-seryl-[protein] + ATP = O-phospho-L-seryl-[protein] + ADP + H(+). The catalysed reaction is L-threonyl-[protein] + ATP = O-phospho-L-threonyl-[protein] + ADP + H(+). Protein kinase which phosphorylates ESR1 (in vitro) and protects it against proteasomal degradation. May also regulate ESR1 levels indirectly via a PKC-AKT-FOXO3 pathway where it decreases the activity of PKC and the phosphorylation of AKT, thereby increasing binding of transcriptional activator FOXO3 to the ESR1 promoter and increasing ESR1 transcription. Involved in endocytic trafficking of N-methyl-D-aspartate receptors (NMDAR) in neurons. The chain is Serine/threonine-protein kinase LMTK3 (Lmtk3) from Mus musculus (Mouse).